The primary structure comprises 483 residues: MGQLVSFIGEIPAIVHEALNVALIAVSIIAIMKGLINIWKSGLFQLIMFLILAGRSCSISIGHHLELQHFIINSTSLLPSMPTLCRINATNSLIRGPFSAQWGLDIFIGDLTILVNPEPGSKTKRMTATNITGCFPNNEDPDSVAQVLSWFFRGVHHDFHLDPTILCDESVTVFRIQMNLTERMYCDRIVSKLARLFGSFGDYCSKVGKKLVIIRNVTWSNQCHEDHVGSMQLILQNAHNQVMRFRKLQNFFSWSLVDSAGNSMPGGYCLEKWMLVASELKCFGNTAVAKCNINHDSEFCDMLRLFDYNKKAIVNLQDKTKAQLDSLIDAVNSLISDNLITKNKIRELMNIPYCNYTKFWYVNHTGLNVHSLPKCWHVRNGSYLNESDFRNEWIIESDHLVSEILAKEYEERQKRTPLSLVDLCFWSTLFYTASIFLHLLHIPTHRHIIGEGCPKPHRLTSDSLCACGFFQLKGRPTRWARIP.

Residue G2 is the site of N-myristoyl glycine; by host attachment. The Extracellular portion of the chain corresponds to 2–17; the sequence is GQLVSFIGEIPAIVHE. Residues 18 to 32 form a helical membrane-spanning segment; it reads ALNVALIAVSIIAIM. Position 33 (K33) is a topological domain, cytoplasmic. A helical membrane pass occupies residues 34-53; it reads GLINIWKSGLFQLIMFLILA. 2 consecutive stretches face the extracellular side: residues 54 to 58 and 59 to 422; these read GRSCS and ISIG…SLVD. C57 provides a ligand contact to Zn(2+). N73, N88, N130, and N179 each carry an N-linked (GlcNAc...) asparagine; by host glycan. 5 disulfide bridges follow: C85–C223, C186–C204, C269–C282, C291–C300, and C354–C375. Residue N216 is glycosylated (N-linked (GlcNAc...) asparagine; by host). 4 N-linked (GlcNAc...) asparagine; by host glycosylation sites follow: N355, N363, N380, and N385. A helical transmembrane segment spans residues 423 to 443; the sequence is LCFWSTLFYTASIFLHLLHIP. Over 444–483 the chain is Cytoplasmic; that stretch reads THRHIIGEGCPKPHRLTSDSLCACGFFQLKGRPTRWARIP. Residues H445, H447, C453, H457, C465, and C467 each contribute to the Zn(2+) site.

It belongs to the arenaviridae GPC protein family. Homotetramer; disulfide-linked. In terms of assembly, homotetramer. GP2 homotetramers bind through ionic interactions with GP1 homotetramers to form the GP complex together with the stable signal peptide. The GP-C polyprotein interacts with the host protease MBTPS1/SKI-1 resulting in the polyprotein processing. In terms of processing, specific enzymatic cleavages in vivo yield mature proteins. GP-C polyprotein is cleaved in the endoplasmic reticulum by the host protease MBTPS1. Only cleaved glycoprotein is incorporated into virions. Post-translationally, the SSP remains stably associated with the GP complex following cleavage by signal peptidase and plays crucial roles in the trafficking of GP through the secretory pathway. Myristoylation is necessary for GP2-mediated fusion activity.

It is found in the virion membrane. The protein resides in the host endoplasmic reticulum membrane. The protein localises to the host Golgi apparatus membrane. Its subcellular location is the host cell membrane. Functionally, class I viral fusion protein that directs fusion of viral and host endosomal membranes, leading to delivery of the nucleocapsid into the cytoplasm. Membrane fusion is mediated by irreversible conformational changes induced upon acidification in the endosome. Its function is as follows. Stable signal peptide (SSP): cleaved and functions as a signal peptide. In addition, it is also retained as the third component of the GP complex. The SSP is required for efficient glycoprotein expression, post-translational maturation cleavage of GP1 and GP2, glycoprotein transport to the cell surface plasma membrane, formation of infectious virus particles, and acid pH-dependent glycoprotein-mediated cell fusion. In terms of biological role, interacts with the host receptor. The polypeptide is Pre-glycoprotein polyprotein GP complex (Peromyscus californicus (California mouse)).